A 61-amino-acid polypeptide reads, in one-letter code: Large ribosomal subunit protein uL29 (61 aa).

Belongs to the universal ribosomal protein uL29 family.

The chain is Large ribosomal subunit protein uL29 from Campylobacter lari (strain RM2100 / D67 / ATCC BAA-1060).